The following is a 196-amino-acid chain: uncharacterized protein (196 aa).

The chain crosses the membrane as a helical span at residues 22–42 (MIIIPMALLVFILIIGSFFAI).

It is found in the cell membrane. This is an uncharacterized protein from Lactobacillus acidophilus (strain ATCC 700396 / NCK56 / N2 / NCFM).